The primary structure comprises 379 residues: Cytochrome b (379 aa).

Transmembrane regions (helical) follow at residues Tyr-34–Met-54, Trp-78–Ala-99, Trp-114–Leu-134, and Phe-179–Met-199. Residues His-84 and His-98 each contribute to the heme b site. 2 residues coordinate heme b: His-183 and His-197. His-202 provides a ligand contact to a ubiquinone. The next 4 membrane-spanning stretches (helical) occupy residues Ile-227–Glu-247, Leu-289–Ser-309, Leu-321–Gly-341, and Ile-349–Ile-369.

The protein belongs to the cytochrome b family. The main subunits of complex b-c1 are: cytochrome b, cytochrome c1 and the Rieske protein. Heme b serves as cofactor.

It localises to the mitochondrion inner membrane. In terms of biological role, component of the ubiquinol-cytochrome c reductase complex (complex III or cytochrome b-c1 complex) that is part of the mitochondrial respiratory chain. The b-c1 complex mediates electron transfer from ubiquinol to cytochrome c. Contributes to the generation of a proton gradient across the mitochondrial membrane that is then used for ATP synthesis. The chain is Cytochrome b (MT-CYB) from Lumbricus terrestris (Common earthworm).